A 430-amino-acid polypeptide reads, in one-letter code: MTTIAKILAREILDSRGNPTLEAEVTLDDGSFGRAAVPSGASTGTKEAVELRDGDKTRYLGKGVRHAVDNVNGTIAETLKNFDAADQQGLDRRLIDLDGTENKGRLGANALLGVSLAAAHAVAASRKQPLWQYLSTITESDVALPVPMMNIINGGAHADNNVDFQEFMVLPVGCSSFSEALRAGTEIFHSLKSVLKGHGLSTAVGDEGGFAPDFRSNVEALDTILEAIGKAGYTAGEDILLGLDVASSEFYDNGKYNLVGENKRLTSEQFVDFLADWVAQYPIISIEDGLAEDDWAGWKLLTERVGKKVQLVGDDLFVTNPKIFKQGIDSGTANAILIKVNQIGTLTETLEAIAMAHAAHYASIVSHRSGETEDTTIADIAVATTATQIKTGSLCRSDRVAKYNQLLRIEQALGSGARYAGRDAFVSLKR.

Gln-165 lines the (2R)-2-phosphoglycerate pocket. The active-site Proton donor is Glu-207. 3 residues coordinate Mg(2+): Asp-244, Glu-287, and Asp-314. Lys-339, Arg-368, Ser-369, and Lys-390 together coordinate (2R)-2-phosphoglycerate. The active-site Proton acceptor is the Lys-339.

The protein belongs to the enolase family. Component of the RNA degradosome, a multiprotein complex involved in RNA processing and mRNA degradation. The cofactor is Mg(2+).

The protein resides in the cytoplasm. It localises to the secreted. Its subcellular location is the cell surface. The enzyme catalyses (2R)-2-phosphoglycerate = phosphoenolpyruvate + H2O. The protein operates within carbohydrate degradation; glycolysis; pyruvate from D-glyceraldehyde 3-phosphate: step 4/5. Functionally, catalyzes the reversible conversion of 2-phosphoglycerate (2-PG) into phosphoenolpyruvate (PEP). It is essential for the degradation of carbohydrates via glycolysis. This chain is Enolase, found in Xanthomonas euvesicatoria pv. vesicatoria (strain 85-10) (Xanthomonas campestris pv. vesicatoria).